The chain runs to 471 residues: Glutamate--tRNA ligase (471 aa).

The short motif at 9–19 (PSPTGYLHVGG) is the 'HIGH' region element. Positions 98, 100, 125, and 127 each coordinate Zn(2+). Residues 237 to 241 (KLSKR) carry the 'KMSKS' region motif. Lys-240 is an ATP binding site.

It belongs to the class-I aminoacyl-tRNA synthetase family. Glutamate--tRNA ligase type 1 subfamily. Monomer. Zn(2+) is required as a cofactor.

It localises to the cytoplasm. It catalyses the reaction tRNA(Glu) + L-glutamate + ATP = L-glutamyl-tRNA(Glu) + AMP + diphosphate. In terms of biological role, catalyzes the attachment of glutamate to tRNA(Glu) in a two-step reaction: glutamate is first activated by ATP to form Glu-AMP and then transferred to the acceptor end of tRNA(Glu). This chain is Glutamate--tRNA ligase, found in Cronobacter sakazakii (strain ATCC BAA-894) (Enterobacter sakazakii).